The primary structure comprises 368 residues: Protein HGH1 homolog (368 aa).

It belongs to the HGH1 family.

The chain is Protein HGH1 homolog from Drosophila pseudoobscura pseudoobscura (Fruit fly).